The sequence spans 389 residues: Equilibrative nucleotide transporter 8 (389 aa).

A run of 10 helical transmembrane segments spans residues 19-39 (VAYV…NALI), 57-77 (TFTV…MTWN), 87-107 (NLGF…DWVW), 119-139 (LMVG…GSLI), 150-170 (MQAI…LRIA), 187-207 (HSYF…CNVL), 238-258 (WPAS…PGFI), 266-286 (LLQS…DFVG), 331-351 (VVVL…VLMI), and 367-387 (IFMV…GWLW).

It belongs to the SLC29A/ENT transporter (TC 2.A.57) family. As to expression, expressed in stems, flowers and siliques.

It is found in the cell membrane. Functionally, may be involved in nucleoside transport. This Arabidopsis thaliana (Mouse-ear cress) protein is Equilibrative nucleotide transporter 8 (ETN8).